A 126-amino-acid polypeptide reads, in one-letter code: Pancreatic polypeptide prohormone (126 aa).

Positions 1–26 (MTATRCCLWLLLLGTCMALLLPEAWG) are cleaved as a signal peptide. Position 62 is a tyrosine amide (Y62). A disordered region spans residues 77-126 (RQSHAAAPGGSHRHPPAGLPAAKGGTGVSGSPPKPWDCLPCRAHSLPSQS).

This sequence belongs to the NPY family. No icosapeptide-like peptide is cleaved from the C-terminal.

It localises to the secreted. Hormone secreted by pancreatic cells that acts as a regulator of pancreatic and gastrointestinal functions probably by signaling through the G protein-coupled receptor NPY4R2. In Cavia porcellus (Guinea pig), this protein is Pancreatic polypeptide prohormone (PPY).